A 571-amino-acid chain; its full sequence is Potassium-transporting ATPase potassium-binding subunit (571 aa).

The next 11 helical transmembrane spans lie at 3-23 (LIGW…VKPL), 64-84 (LGYG…LYAI), 135-155 (LGLT…AVAL), 179-199 (LYVL…QGMP), 254-274 (LANL…TNVF), 284-304 (GWAI…VTYA), 330-350 (FGIV…CGAV), 357-376 (FTAL…EIIV), 421-441 (MLAI…ATVL), 488-508 (LALG…AIAG), and 527-547 (GGLF…LTFF).

Belongs to the KdpA family. As to quaternary structure, the system is composed of three essential subunits: KdpA, KdpB and KdpC.

The protein localises to the cell inner membrane. Part of the high-affinity ATP-driven potassium transport (or Kdp) system, which catalyzes the hydrolysis of ATP coupled with the electrogenic transport of potassium into the cytoplasm. This subunit binds the periplasmic potassium ions and delivers the ions to the membrane domain of KdpB through an intramembrane tunnel. The chain is Potassium-transporting ATPase potassium-binding subunit from Methylorubrum populi (strain ATCC BAA-705 / NCIMB 13946 / BJ001) (Methylobacterium populi).